Consider the following 315-residue polypeptide: 1-aminocyclopropane-1-carboxylate oxidase 1 (315 aa).

The Fe2OG dioxygenase domain occupies 153-253; the sequence is PNFGTKVSNY…RMSLASFYNP (101 aa). Residues His-177, Asp-179, and His-234 each coordinate Fe cation.

Belongs to the iron/ascorbate-dependent oxidoreductase family. Requires Fe cation as cofactor. As to expression, predominantly expressed in the petals and the stigma and style.

It carries out the reaction 1-aminocyclopropane-1-carboxylate + L-ascorbate + O2 = ethene + L-dehydroascorbate + hydrogen cyanide + CO2 + 2 H2O. The protein operates within alkene biosynthesis; ethylene biosynthesis via S-adenosyl-L-methionine; ethylene from S-adenosyl-L-methionine: step 2/2. The chain is 1-aminocyclopropane-1-carboxylate oxidase 1 (ACO1) from Solanum lycopersicum (Tomato).